Consider the following 290-residue polypeptide: Diaminopimelate epimerase (290 aa).

Substrate is bound by residues N11 and N78. Residue C87 is the Proton donor of the active site. Substrate-binding positions include 88 to 89, N163, N199, and 217 to 218; these read GN and ER. C226 functions as the Proton acceptor in the catalytic mechanism. Residue 227–228 coordinates substrate; that stretch reads GT.

The protein belongs to the diaminopimelate epimerase family. Homodimer.

It is found in the cytoplasm. The enzyme catalyses (2S,6S)-2,6-diaminopimelate = meso-2,6-diaminopimelate. It functions in the pathway amino-acid biosynthesis; L-lysine biosynthesis via DAP pathway; DL-2,6-diaminopimelate from LL-2,6-diaminopimelate: step 1/1. Functionally, catalyzes the stereoinversion of LL-2,6-diaminopimelate (L,L-DAP) to meso-diaminopimelate (meso-DAP), a precursor of L-lysine and an essential component of the bacterial peptidoglycan. This Mycobacterium ulcerans (strain Agy99) protein is Diaminopimelate epimerase.